The following is a 356-amino-acid chain: sn-glycerol-3-phosphate import ATP-binding protein UgpC (356 aa).

The region spanning 4–235 is the ABC transporter domain; the sequence is LKLQAVTKSW…PASRFVASFI (232 aa). ATP is bound at residue 37 to 44; it reads GPSGCGKS.

It belongs to the ABC transporter superfamily. sn-glycerol-3-phosphate importer (TC 3.A.1.1.3) family. The complex is composed of two ATP-binding proteins (UgpC), two transmembrane proteins (UgpA and UgpE) and a solute-binding protein (UgpB).

It is found in the cell inner membrane. The enzyme catalyses sn-glycerol 3-phosphate(out) + ATP + H2O = sn-glycerol 3-phosphate(in) + ADP + phosphate + H(+). In terms of biological role, part of the ABC transporter complex UgpBAEC involved in sn-glycerol-3-phosphate (G3P) import. Responsible for energy coupling to the transport system. This is sn-glycerol-3-phosphate import ATP-binding protein UgpC from Salmonella choleraesuis (strain SC-B67).